The chain runs to 117 residues: Acidic phospholipase A2 (117 aa).

Intrachain disulfides connect C11-C70, C25-C116, C27-C43, C42-C98, C49-C91, C59-C84, and C77-C89. Positions 26, 28, and 30 each coordinate Ca(2+). The active site involves H46. D47 serves as a coordination point for Ca(2+). The N-linked (GlcNAc...) asparagine glycan is linked to N80. Residue D92 is part of the active site.

Requires Ca(2+) as cofactor. In terms of tissue distribution, expressed by the venom gland.

The protein resides in the secreted. The enzyme catalyses a 1,2-diacyl-sn-glycero-3-phosphocholine + H2O = a 1-acyl-sn-glycero-3-phosphocholine + a fatty acid + H(+). Snake venom phospholipase A2 (PLA2) that shows strong myotoxicity and induces edema in mice. Shows no cytotoxicity in vitro. Has a strong anticoagulant effect in vitro. PLA2 catalyzes the calcium-dependent hydrolysis of the 2-acyl groups in 3-sn-phosphoglycerides. The chain is Acidic phospholipase A2 from Micrurus dumerilii (Coral snake).